Consider the following 244-residue polypeptide: tRNA pseudouridine synthase A (244 aa).

Residue Asp-52 is the Nucleophile of the active site. Residue Tyr-110 participates in substrate binding.

Belongs to the tRNA pseudouridine synthase TruA family. In terms of assembly, homodimer.

The catalysed reaction is uridine(38/39/40) in tRNA = pseudouridine(38/39/40) in tRNA. Functionally, formation of pseudouridine at positions 38, 39 and 40 in the anticodon stem and loop of transfer RNAs. This Finegoldia magna (strain ATCC 29328 / DSM 20472 / WAL 2508) (Peptostreptococcus magnus) protein is tRNA pseudouridine synthase A.